We begin with the raw amino-acid sequence, 102 residues long: Large ribosomal subunit protein bL21 (102 aa).

This sequence belongs to the bacterial ribosomal protein bL21 family. Part of the 50S ribosomal subunit. Contacts protein L20.

Functionally, this protein binds to 23S rRNA in the presence of protein L20. This chain is Large ribosomal subunit protein bL21, found in Photorhabdus laumondii subsp. laumondii (strain DSM 15139 / CIP 105565 / TT01) (Photorhabdus luminescens subsp. laumondii).